The primary structure comprises 78 residues: Putative gastrointestinal growth factor xP1 (78 aa).

The N-terminal stretch at 1 to 23 (MNYKVFCLVAIALIVGSIGSANG) is a signal peptide. A P-type domain is found at 30 to 73 (EQCSVERLARVNCGYSGITPQECTKQGCCFDSTIQDAPWCFYPR). 3 cysteine pairs are disulfide-bonded: C32-C58, C42-C57, and C52-C69.

In terms of tissue distribution, stomach mucosa.

It is found in the secreted. Its function is as follows. May act as a growth factor. The protein is Putative gastrointestinal growth factor xP1 (p1) of Xenopus laevis (African clawed frog).